We begin with the raw amino-acid sequence, 208 residues long: Small ribosomal subunit protein uS4 (208 aa).

The 65-residue stretch at 95–159 (RRIDNIVYRA…FKKLVRSNIE (65 aa)) folds into the S4 RNA-binding domain.

This sequence belongs to the universal ribosomal protein uS4 family. Part of the 30S ribosomal subunit. Contacts protein S5. The interaction surface between S4 and S5 is involved in control of translational fidelity.

Functionally, one of the primary rRNA binding proteins, it binds directly to 16S rRNA where it nucleates assembly of the body of the 30S subunit. With S5 and S12 plays an important role in translational accuracy. The protein is Small ribosomal subunit protein uS4 of Borrelia recurrentis (strain A1).